Consider the following 471-residue polypeptide: 5-hydroxytryptamine receptor 2A (471 aa).

Residues methionine 1–leucine 80 are Extracellular-facing. N-linked (GlcNAc...) asparagine glycans are attached at residues asparagine 8, asparagine 38, asparagine 44, asparagine 51, and asparagine 54. A helical membrane pass occupies residues threonine 81 to methionine 97. The Cytoplasmic portion of the chain corresponds to alanine 98–tyrosine 111. The chain crosses the membrane as a helical span at residues phenylalanine 112–tyrosine 137. Residues glycine 138–lysine 146 lie on the Extracellular side of the membrane. The chain crosses the membrane as a helical span at residues leucine 147–leucine 171. Cysteine 148 and cysteine 227 are disulfide-bonded. Serotonin is bound at residue aspartate 155. The short motif at aspartate 172 to tyrosine 174 is the DRY motif; important for ligand-induced conformation changes element. Topologically, residues aspartate 172–lysine 191 are cytoplasmic. Residues alanine 192 to leucine 215 traverse the membrane as a helical segment. The Extracellular portion of the chain corresponds to glutamine 216 to aspartate 232. Residues asparagine 233 to isoleucine 258 form a helical membrane-spanning segment. Residues lysine 259–cysteine 322 lie on the Cytoplasmic side of the membrane. At serine 280 the chain carries Phosphoserine. The helical transmembrane segment at lysine 323 to isoleucine 348 threads the bilayer. Residue asparagine 343 participates in serotonin binding. A disulfide bridge connects residues cysteine 349 and cysteine 353. At cysteine 349–histidine 356 the chain is on the extracellular side. The chain crosses the membrane as a helical span at residues valine 357–leucine 382. Positions asparagine 376 to tyrosine 380 match the NPxxY motif; important for ligand-induced conformation changes and signaling motif. At phenylalanine 383–valine 471 the chain is on the cytoplasmic side. Positions serine 469 to valine 471 match the PDZ-binding motif.

It belongs to the G-protein coupled receptor 1 family. As to quaternary structure, interacts (via C-terminus) with MPDZ and PATJ. May interact (via C-terminus) with MPP3, PRDX6, DLG4, DLG1, CASK, APBA1 and MAGI2. Interacts with GRM2 and DRD2; this may affect signaling.

Its subcellular location is the cell membrane. The protein resides in the cell projection. The protein localises to the dendrite. It is found in the axon. It localises to the cytoplasmic vesicle. Its subcellular location is the membrane. The protein resides in the caveola. The protein localises to the presynapse. Its activity is regulated as follows. G-protein coupled receptor activity is regulated by lipids: oleamide increases HTR2A-mediated activity. In terms of biological role, G-protein coupled receptor for 5-hydroxytryptamine (serotonin). Also functions as a receptor for various drugs and psychoactive substances, including mescaline, psilocybin, 1-(2,5-dimethoxy-4-iodophenyl)-2-aminopropane (DOI) and lysergic acid diethylamide (LSD). Ligand binding causes a conformation change that triggers signaling via guanine nucleotide-binding proteins (G proteins) and modulates the activity of downstream effectors. HTR2A is coupled to G(q)/G(11) G alpha proteins and activates phospholipase C-beta, releasing diacylglycerol (DAG) and inositol 1,4,5-trisphosphate (IP3) second messengers that modulate the activity of phosphatidylinositol 3-kinase and promote the release of Ca(2+) ions from intracellular stores, respectively. Beta-arrestin family members inhibit signaling via G proteins and mediate activation of alternative signaling pathways. Affects neural activity, perception, cognition and mood. Plays a role in the regulation of behavior, including responses to anxiogenic situations and psychoactive substances. Plays a role in intestinal smooth muscle contraction, and may play a role in arterial vasoconstriction. This chain is 5-hydroxytryptamine receptor 2A (HTR2A), found in Cricetulus griseus (Chinese hamster).